Here is a 457-residue protein sequence, read N- to C-terminus: MQKYISEARLLLALAIPVILAQIAQTAMGFVDTVMAGGYSATDMAAVAIGTSIWLPAILFGHGLLLALTPVIAQLNGSGRRERIAHQVRQGFWLAGFVSVLIMLVLWNAGYIIRSMENIDPALADKAVGYLRALLWGAPGYLFFQVARNQCEGLAKTKPGMVMGFIGLLVNIPVNYIFIYGHFGMPELGGVGCGVATAAVYWVMFLAMVSYIKRARSMRDIRNEKGTAKPDPAVMKRLIQLGLPIALALFFEVTLFAVVALLVSPLGIVDVAGHQIALNFSSLMFVLPMSLAAAVTIRVGYRLGQGSTLDAQTAARTGLMVGVCMATLTAIFTVSLREQIALLYNDNPEVVTLAAHLMLLAAVYQISDSIQVIGSGILRGYKDTRSIFYITFTAYWVLGLPSGYILALTDLVVKPMGPAGFWIGFIIGLTSAAIMMMLRMRFLQRLPSVIILQRASR.

12 consecutive transmembrane segments (helical) span residues 11–31, 53–73, 93–113, 127–147, 160–180, 189–209, 243–263, 276–296, 314–334, 350–370, 387–407, and 418–438; these read LLALAIPVILAQIAQTAMGFV, IWLPAILFGHGLLLALTPVIA, WLAGFVSVLIMLVLWNAGYII, AVGYLRALLWGAPGYLFFQVA, GMVMGFIGLLVNIPVNYIFIY, GGVGCGVATAAVYWVMFLAMV, LPIALALFFEVTLFAVVALLV, IALNFSSLMFVLPMSLAAAVT, AARTGLMVGVCMATLTAIFTV, VVTLAAHLMLLAAVYQISDSI, IFYITFTAYWVLGLPSGYILA, and PAGFWIGFIIGLTSAAIMMML.

It belongs to the multi antimicrobial extrusion (MATE) (TC 2.A.66.1) family. MdtK subfamily.

It is found in the cell inner membrane. In terms of biological role, multidrug efflux pump that functions probably as a Na(+)/drug antiporter. This Escherichia coli (strain SE11) protein is Multidrug resistance protein MdtK.